We begin with the raw amino-acid sequence, 74 residues long: Brevinin-2MT1 (74 aa).

The N-terminal stretch at Met1–Cys22 is a signal peptide. The propeptide at Glu23–Glu39 is removed in mature form. Cys68 and Cys74 are disulfide-bonded.

It belongs to the frog skin active peptide (FSAP) family. Brevinin subfamily. As to expression, expressed by the skin glands.

It is found in the secreted. Antimicrobial peptide. Active against a variety of Gram-negative and Gram-positive bacterial strains. Active against fungi. Shows hemolytic activity against human erythrocytes. This chain is Brevinin-2MT1, found in Amolops mantzorum (Sichuan torrent frog).